The following is an 86-amino-acid chain: Arminin 7246 (86 aa).

Positions 1-18 are cleaved as a signal peptide; that stretch reads MRPEYAVLFLALIALTYA. Positions 19–57 are excised as a propeptide; the sequence is RSNEDVREEIKNEIEKDILEDLVEDEGELDDKAIDVNDA. Alanine amide is present on alanine 83.

This sequence belongs to the arminin family. Expressed in entodermal epithelium along the body column.

It localises to the secreted. It is found in the target cell membrane. Functionally, antimicrobial peptide with a broad-spectrum antimicrobial activity. Keeps its antibacterial activity under a wide range of salt concentrations that mimic physiological conditions of human blood, which is surprising, since Hydra is an obligate freshwater animal with nearly no salt tolerance. Does not affect red blood cells. In Hydra viridissima (Green hydra), this protein is Arminin 7246.